Consider the following 287-residue polypeptide: Large ribosomal subunit protein uL2 (287 aa).

The disordered stretch occupies residues 221–287 (RGSVMNPCDH…SKRSRGGRDS (67 aa)). Residues 258 to 287 (KTRKRNKPSNKFVLRKRRKTSKRSRGGRDS) are compositionally biased toward basic residues.

The protein belongs to the universal ribosomal protein uL2 family. In terms of assembly, part of the 50S ribosomal subunit. Forms a bridge to the 30S subunit in the 70S ribosome.

One of the primary rRNA binding proteins. Required for association of the 30S and 50S subunits to form the 70S ribosome, for tRNA binding and peptide bond formation. It has been suggested to have peptidyltransferase activity; this is somewhat controversial. Makes several contacts with the 16S rRNA in the 70S ribosome. The chain is Large ribosomal subunit protein uL2 from Synechococcus sp. (strain WH7803).